Here is a 59-residue protein sequence, read N- to C-terminus: MAVPKKRTSMSKKRIRKNLWKKKTYFSIVQSYSLAKSRSFSSGNEHPKPKGFSGQQANK.

Residues 37-59 are disordered; it reads SRSFSSGNEHPKPKGFSGQQANK.

It belongs to the bacterial ribosomal protein bL32 family.

Its subcellular location is the plastid. It localises to the chloroplast. The chain is Large ribosomal subunit protein bL32c from Saccharum hybrid (Sugarcane).